Here is a 950-residue protein sequence, read N- to C-terminus: Lon protease homolog, mitochondrial (950 aa).

Residues Met-1–Gly-65 constitute a mitochondrion transit peptide. Disordered regions lie at residues Trp-67–Gly-94 and Pro-212–Lys-243. Positions Leu-112–Phe-360 constitute a Lon N-terminal domain. The segment covering Lys-224–Lys-233 has biased composition (basic residues). Gly-513–Thr-520 contacts ATP. The Lon proteolytic domain occupies Val-749–Leu-939. Residues Ser-845 and Lys-888 contribute to the active site.

The protein belongs to the peptidase S16 family. As to quaternary structure, homohexamer. Organized in a ring with a central cavity. The ATP-binding and proteolytic domains (AP-domain) form a hexameric chamber, while the N-terminal domain is arranged as a trimer of dimers. DNA and RNA binding is stimulated by substrate and inhibited by ATP binding. Interacts with TWNK and mitochondrial DNA polymerase subunit POLG.

The protein localises to the mitochondrion matrix. It catalyses the reaction Hydrolysis of proteins in presence of ATP.. Functionally, ATP-dependent serine protease that mediates the selective degradation of misfolded, unassembled or oxidatively damaged polypeptides as well as certain short-lived regulatory proteins in the mitochondrial matrix. Endogenous substrates include mitochondrial steroidogenic acute regulatory (StAR) protein, DELE1, helicase Twinkle (TWNK) and the large ribosomal subunit protein MRPL32/bL32m. MRPL32/bL32m is protected from degradation by LONP1 when it is bound to a nucleic acid (RNA), but TWNK is not. May also have a chaperone function in the assembly of inner membrane protein complexes. Participates in the regulation of mitochondrial gene expression and in the maintenance of the integrity of the mitochondrial genome. Binds to mitochondrial promoters and RNA in a single-stranded, site-specific, and strand-specific manner. May regulate mitochondrial DNA replication and/or gene expression using site-specific, single-stranded DNA binding to target the degradation of regulatory proteins binding to adjacent sites in mitochondrial promoters. The polypeptide is Lon protease homolog, mitochondrial (Lonp1) (Rattus norvegicus (Rat)).